The sequence spans 265 residues: 4-hydroxy-tetrahydrodipicolinate reductase (265 aa).

Residues 7–12 (GASGRM) and aspartate 33 contribute to the NAD(+) site. Arginine 34 is a binding site for NADP(+). NAD(+)-binding positions include 96-98 (GTT) and 120-123 (AANM). The Proton donor/acceptor role is filled by histidine 153. Histidine 154 provides a ligand contact to (S)-2,3,4,5-tetrahydrodipicolinate. Lysine 157 (proton donor) is an active-site residue. 163 to 164 (GT) is a (S)-2,3,4,5-tetrahydrodipicolinate binding site.

This sequence belongs to the DapB family.

The protein localises to the cytoplasm. The enzyme catalyses (S)-2,3,4,5-tetrahydrodipicolinate + NAD(+) + H2O = (2S,4S)-4-hydroxy-2,3,4,5-tetrahydrodipicolinate + NADH + H(+). It catalyses the reaction (S)-2,3,4,5-tetrahydrodipicolinate + NADP(+) + H2O = (2S,4S)-4-hydroxy-2,3,4,5-tetrahydrodipicolinate + NADPH + H(+). It functions in the pathway amino-acid biosynthesis; L-lysine biosynthesis via DAP pathway; (S)-tetrahydrodipicolinate from L-aspartate: step 4/4. Its function is as follows. Catalyzes the conversion of 4-hydroxy-tetrahydrodipicolinate (HTPA) to tetrahydrodipicolinate. This chain is 4-hydroxy-tetrahydrodipicolinate reductase, found in Burkholderia multivorans (strain ATCC 17616 / 249).